Here is a 271-residue protein sequence, read N- to C-terminus: Autophagy protein 5 (271 aa).

Lys145 participates in a covalent cross-link: Glycyl lysine isopeptide (Lys-Gly) (interchain with G-Cter in ATG12).

The protein belongs to the ATG5 family. Conjugated with ATG12. Conjugated to ATG12; which is essential for autophagy.

The protein localises to the preautophagosomal structure membrane. Its function is as follows. Involved in cytoplasm to vacuole transport (Cvt) and autophagic vesicle formation. Autophagy is essential for maintenance of amino acid levels and protein synthesis under nitrogen starvation. Required for selective autophagic degradation of the nucleus (nucleophagy). Also required for mitophagy, which eliminates defective or superfluous mitochondria in order to fulfill cellular energy requirements and prevent excess ROS production. Conjugation with ATG12, through a ubiquitin-like conjugating system involving ATG7 as an E1-like activating enzyme and ATG10 as an E2-like conjugating enzyme, is essential for its function. The ATG12-ATG5 conjugate acts as an E3-like enzyme which is required for lipidation of ATG8 and ATG8 association to the vesicle membranes. This Kluyveromyces lactis (strain ATCC 8585 / CBS 2359 / DSM 70799 / NBRC 1267 / NRRL Y-1140 / WM37) (Yeast) protein is Autophagy protein 5 (ATG5).